The following is a 132-amino-acid chain: Salivary protein 15 Iper-2 (132 aa).

Residues 1 to 18 (MKVVCIIVLFVIVAVNES) form the signal peptide. N-linked (GlcNAc...) asparagine glycans are attached at residues Asn-24, Asn-36, Asn-62, Asn-89, and Asn-101. The segment at 113–132 (GPNGQTCADKSQCVGHIPGC) is CD4-binding.

It belongs to the salp15 family. In terms of assembly, interacts with host CD4. Interacts with host DC-SIGN (CD209). As to quaternary structure, (Microbial infection) Interacts with Borrelia outer surface protein C (OspC). As to expression, expressed in salivary glands from feeding female ticks. Highly expressed 1 day after start of feeding, and weakly expressed at the initiation of feeding and 4 days after start of feeding.

The protein resides in the secreted. In terms of biological role, salivary tick protein that downregulates host immune system by binding to both dendritic cells, and CD4(+) T cells. Specifically binds to the CD4 coreceptor on T cells. This interaction prevents the activation of the Src kinase, Lck, and its downstream substrate Zap-70, and results in deficient activation of PLCgamma1, the repression of calcium fluxes triggered by T-cell antigen receptor (TCR) ligation, and a subsequent reduction in interleukin-2 production. This salivary protein also binds to DC-SIGN (CD209) on dendritic cells (DC) and activates the Raf-1 kinase/MEK signaling pathway that results in down-regulating expression of pro-inflammatory cytokines. Furthermore, it inhibits T cell proliferation induced by DCs. It also inhibits in vitro keratinocyte inflammation induced by Borrelia burgdorferi or by the major outer surface protein (OspC) of Borrelia. In addition, it downregulates chemokines and monocyte chemoattractant protein 1, as well as several antimicrobial peptides such as defensins, cathelicidin, psoriasin, and RNase 7. Apart from its immunomodulatory activities, it is also associated with protection of Borrelia spirochetes from antibody-mediated killing through its binding to OspC. In vivo, tests on different immune disease animal models show promising therapeutic results, e.g., in inhibiting HIV infection, experimental autoimmune encephalomyelitis, transplantation rejection, and asthma. Its function is as follows. (Microbial infection) Protects Borrelia garinii from anti-Borrelia antibody-mediated cytotoxicity in vitro. May facilitate B.garinii transmission in mouse model. Functionally, (Microbial infection) Protects Borrelia burgdorferi from anti-Borrelia antibody-mediated cytotoxicity in vitro. (Microbial infection) Protects Borrelia afzelii from anti-Borrelia antibody-mediated cytotoxicity in vitro. The chain is Salivary protein 15 Iper-2 from Ixodes persulcatus (Taiga tick).